Consider the following 229-residue polypeptide: NAD(P)H-hydrate epimerase (229 aa).

The YjeF N-terminal domain occupies 10 to 217; sequence AINVDQELFN…ALQRKYDLNL (208 aa). (6S)-NADPHX is bound at residue 60-64; it reads NNGGD. Residues Asn-61 and Asp-125 each coordinate K(+). (6S)-NADPHX-binding positions include 129 to 135 and Asp-158; that span reads GFSFKPP. Residue Ser-161 coordinates K(+).

It belongs to the NnrE/AIBP family. The cofactor is K(+).

The enzyme catalyses (6R)-NADHX = (6S)-NADHX. The catalysed reaction is (6R)-NADPHX = (6S)-NADPHX. In terms of biological role, catalyzes the epimerization of the S- and R-forms of NAD(P)HX, a damaged form of NAD(P)H that is a result of enzymatic or heat-dependent hydration. This is a prerequisite for the S-specific NAD(P)H-hydrate dehydratase to allow the repair of both epimers of NAD(P)HX. The chain is NAD(P)H-hydrate epimerase from Drosophila ananassae (Fruit fly).